The chain runs to 133 residues: ATP synthase epsilon chain, chloroplastic (133 aa).

This sequence belongs to the ATPase epsilon chain family. F-type ATPases have 2 components, CF(1) - the catalytic core - and CF(0) - the membrane proton channel. CF(1) has five subunits: alpha(3), beta(3), gamma(1), delta(1), epsilon(1). CF(0) has three main subunits: a, b and c.

The protein localises to the plastid. The protein resides in the chloroplast thylakoid membrane. Produces ATP from ADP in the presence of a proton gradient across the membrane. The protein is ATP synthase epsilon chain, chloroplastic of Mesostigma viride (Green alga).